A 2800-amino-acid chain; its full sequence is Probable serine/threonine-protein kinase roco5 (2800 aa).

A compositionally biased stretch (basic and acidic residues) spans 1–61; it reads MEVIKKEKKD…EKEKDKEKDG (61 aa). Disordered regions lie at residues 1–92, 123–225, and 417–437; these read MEVI…SAQS, TTTT…SPVD, and GINSANSNNNNNNSGGGSSGI. Residues 77 to 86 are compositionally biased toward pro residues; sequence PTPPPPPPPS. Composition is skewed to low complexity over residues 123-134 and 143-170; these read TTTTTTTTSSNN and NNNTSNNNINNNNKTSNTTGSNVSSSNN. Positions 176–190 are enriched in polar residues; the sequence is INVTSLDSGGNNNAS. Basic and acidic residues predominate over residues 194 to 218; sequence ISNEHSPKNRKEKEKEKDKDNKEDS. One can recognise a DH domain in the interval 227 to 508; sequence NRRKLVEGFM…VQVVKDIVNE (282 aa). Low complexity predominate over residues 417–429; that stretch reads GINSANSNNNNNN. The PH domain maps to 540-649; that stretch reads KFLKEGILIE…WFQVLSQASL (110 aa). 4 LRR repeats span residues 777–800, 805–832, 834–856, and 861–885; these read NKSITHLTLSQNSINDPCAVALGD, NHSLIQMDLSENTIADKGLISLIDGILS, PSITVVILTQNQITDTGAKHISK, and NQTLNALFLEDNNITQSMGAEIIDQ. Residues 926-946 form a disordered region; it reads KQLQVNQKSTTPSTSTSTTSS. Positions 934–946 are enriched in low complexity; the sequence is STTPSTSTSTTSS. LRR repeat units lie at residues 971–984, 985–1007, 1008–1031, 1033–1056, 1058–1077, 1078–1101, 1128–1151, 1152–1174, 1175–1197, and 1199–1222; these read LNKLNMLSLDSRRI, SDLKELYLDHNCISSIPVSILKE, LKNLQILDLSNNQLSSLPSEISEM, ELKLLNVSHNNLSSLPIELGTLCK, NHLDISFNFIETINVNSLSQ, LVNLKVLMMQRNYFNRLPIEIFTR, AIKATKLDLSDCGLSALPIEIGSI, SSLIELDLTNNRIKDLPPQIGKL, SSLQTLNLSNNAIESLPWQLSQL, and TLKVLNITGNPISFDGASNAKISI. Residues 1244–1464 enclose the Roc domain; the sequence is KEKPCMRMKL…NHIVKLGKAE (221 aa). GTP is bound by residues 1257 to 1264, 1348 to 1352, and 1407 to 1410; these read GQENVGKT, DFAGQ, and THLD. Residues 1473–1604 enclose the COR 1 domain; the sequence is RSYFQLENLI…KFEIVHPLPD (132 aa). Disordered stretches follow at residues 1605–1665 and 1688–1711; these read PKAT…SLLN and DQSTSPSNSTTPSPNTSSNNFSDS. Low complexity-rich tracts occupy residues 1610-1645, 1653-1665, and 1688-1707; these read SSSSSSPSTTQKSLNNSGSNLKSSGSAISTSSSSTT, RTNSTTNTTSLLN, and DQSTSPSNSTTPSPNTSSNN. Positions 1717–1790 constitute a COR 2 domain; sequence KSSTKHLVPI…VKEFWKNGLL (74 aa). The segment covering 1886–2008 has biased composition (low complexity); it reads SQQQHHQQQQ…LNPDSTSSSN (123 aa). 2 disordered regions span residues 1886–2011 and 2050–2070; these read SQQQ…NETS and RNTNKPKINGTTGSGSSSSIV. Polar residues predominate over residues 2050–2059; sequence RNTNKPKING. Residues 2175–2440 form the Protein kinase domain; sequence LEIIEKVGEG…PTFIDIHSRL (266 aa). ATP-binding positions include 2181-2189 and Lys-2202; that span reads VGEGGFGIV. Catalysis depends on Asp-2300, which acts as the Proton acceptor. Composition is skewed to low complexity over residues 2452-2490, 2583-2654, 2669-2685, and 2694-2704; these read TTTNSAKSTISTGFNSNSGATTTTKPKSSTISSGSGTTS, LKTP…SPIS, TTQTTSTPPTNQTPNPT, and SSLSSNSINKP. 2 disordered regions span residues 2452 to 2498 and 2544 to 2800; these read TTTN…HPQL and AGGN…AIPK. Residues 2705 to 2723 are compositionally biased toward pro residues; that stretch reads PSKPLPTPGGVTSPPPPPT. The span at 2730–2756 shows a compositional bias: polar residues; that stretch reads IKFNSISAGNKTIGQSSTLPSSTLKQF. Low complexity predominate over residues 2757-2787; sequence TANNNTSPSGSSSLPNSTVSSPSSSFLLRPT.

This sequence belongs to the protein kinase superfamily. TKL Ser/Thr protein kinase family. ROCO subfamily.

It carries out the reaction L-seryl-[protein] + ATP = O-phospho-L-seryl-[protein] + ADP + H(+). The catalysed reaction is L-threonyl-[protein] + ATP = O-phospho-L-threonyl-[protein] + ADP + H(+). Functionally, may act as a serine/threonine-protein kinase and guanine-nucleotide releasing factor. The chain is Probable serine/threonine-protein kinase roco5 (roco5) from Dictyostelium discoideum (Social amoeba).